The sequence spans 166 residues: Myosin regulatory light chain 2, ventricular/cardiac muscle isoform (166 aa).

At A2 the chain carries N,N,N-trimethylalanine. N14 bears the Deamidated asparagine mark. S15 is modified (phosphoserine; by ZIPK/DAPK3). S19 bears the Phosphoserine mark. EF-hand domains follow at residues 24-59, 94-129, and 130-165; these read TQIQ…LGRV, DPEE…QAER, and FSKE…GEEK. 4 residues coordinate Ca(2+): D37, N39, D41, and D48. T52 bears the Phosphothreonine mark.

As to quaternary structure, myosin is a hexamer of 2 heavy chains and 4 light chains. Interacts with MYOC. N-terminus is methylated by METTL11A/NTM1. In terms of processing, phosphorylated by MYLK3 and MYLK2; promotes cardiac muscle contraction and function. Dephosphorylated by PPP1CB complexed to PPP1R12B. The phosphorylated form in adult is expressed as gradients across the heart from endocardium (low phosphorylation) to epicardium (high phosphorylation); regulates cardiac torsion and workload distribution. As to expression, highly expressed in type I muscle fibers.

It is found in the cytoplasm. Its subcellular location is the myofibril. The protein localises to the sarcomere. It localises to the a band. Its function is as follows. Contractile protein that plays a role in heart development and function. Following phosphorylation, plays a role in cross-bridge cycling kinetics and cardiac muscle contraction by increasing myosin lever arm stiffness and promoting myosin head diffusion; as a consequence of the increase in maximum contraction force and calcium sensitivity of contraction force. These events altogether slow down myosin kinetics and prolong duty cycle resulting in accumulated myosins being cooperatively recruited to actin binding sites to sustain thin filament activation as a means to fine-tune myofilament calcium sensitivity to force. During cardiogenesis plays an early role in cardiac contractility by promoting cardiac myofibril assembly. This is Myosin regulatory light chain 2, ventricular/cardiac muscle isoform from Homo sapiens (Human).